The primary structure comprises 218 residues: Small ribosomal subunit protein uS3c (218 aa).

In terms of domain architecture, KH type-2 spans V47 to S118.

It belongs to the universal ribosomal protein uS3 family. As to quaternary structure, part of the 30S ribosomal subunit.

The protein localises to the plastid. Its subcellular location is the chloroplast. This is Small ribosomal subunit protein uS3c (rps3) from Crucihimalaya wallichii (Rock-cress).